We begin with the raw amino-acid sequence, 347 residues long: MLWIDKYKPTSLDKMDYHNDISINLKNMIKSGDFPHLLVYGPSGAGKKTRILAVLQEIYGPNALKLKIDHRTFKHPTSSKNIQITTISSHYHIEINPGEAGSYDRVVIQTIIKEIAQSPPIDSGSLGAFKIVILNEVDKLSKDAQHALRRTMEKYATFCRLILCCDSTAKVIDPIKSRCLGIRVPAPSQEEIEKVLAKVATAEKFDLPSKLAVNVAKQSGGNLRYALMLLESQKAKQYPFQSTELPLLDWENYISQIVKDCFEEQSPARLSIVRGKLYELLGHCIPPELIFKTLLLEIFKKLDHNMKFEIIHWASYYEHRSQIGSKPIFHLEAFIAKFMSVYKKYNQ.

It belongs to the activator 1 small subunits family. In terms of assembly, heteropentamer of various rfc subunits that forms a complex (RFC) with PCNA in the presence of ATP.

The protein resides in the nucleus. Functionally, the elongation of primed DNA templates by DNA polymerase delta and epsilon requires the action of the accessory proteins PCNA and activator 1. This Dictyostelium discoideum (Social amoeba) protein is Probable replication factor C subunit 3 (rfc3).